A 198-amino-acid chain; its full sequence is Large ribosomal subunit protein eL18 (198 aa).

Positions 157 to 198 (RHFGASGVPGSHSKPYATNRGKETKRGRRTGRSYKRKAFRHV) are disordered. A compositionally biased stretch (basic residues) spans 179-198 (ETKRGRRTGRSYKRKAFRHV).

The protein belongs to the eukaryotic ribosomal protein eL18 family.

Its subcellular location is the cytoplasm. This Leishmania major protein is Large ribosomal subunit protein eL18 (RPL18-A).